Consider the following 314-residue polypeptide: Dihydroorotate dehydrogenase (fumarate) (314 aa).

Residues Ala-21 and Lys-45–Ser-46 contribute to the FMN site. Residues Lys-45, Asn-69–Leu-73, and Asn-129 each bind substrate. Asn-129 is an FMN binding site. The active-site Nucleophile is the Cys-132. Asn-134 contacts substrate. Residues Lys-166 and Val-195 each contribute to the FMN site. A substrate-binding site is contributed by Asn-196–Ser-197. Residues Gly-224, Gly-251–Gly-252, and Gly-273–Thr-274 each bind FMN.

This sequence belongs to the dihydroorotate dehydrogenase family. Type 1 subfamily. In terms of assembly, homodimer. It depends on FMN as a cofactor.

It localises to the cytoplasm. It catalyses the reaction (S)-dihydroorotate + fumarate = orotate + succinate. It participates in pyrimidine metabolism; UMP biosynthesis via de novo pathway. Its function is as follows. Catalyzes the conversion of dihydroorotate to orotate with fumarate as the electron acceptor. Molecular oxygen can replace fumarate in vitro. The protein is Dihydroorotate dehydrogenase (fumarate) (pyr4) of Trypanosoma cruzi (strain CL Brener).